An 888-amino-acid chain; its full sequence is MAETVELPSRLAILPFRNKVLLPGAIIRIRCTSHSSVTLVEQELWQKEEKGLIGILPVRDDAEGSSIGTMINPGAGSDSGERSLKFLVGTTDAQKSDAKDQQDLQWHTRGVAARALHLSRGVEKPSGRVTYVVVLEGLSRFNVQELGKRGPYSVARITSLEMTKAELEQVKQDPDFVALSRQFKTTAMELVSVLEQKQKTGGRTKVLLETVPIHKLADIFVASFEMSFEEQLSMLDSVDLKVRLSKATELVDRHLQSIRVAEKITQKVEGQLSKSQKEYLLRQQMRAIKEELGDNDDDEDDVAALERKMQAAGMPSNIWKHAQRELRRLKKMQPQQPGYNSSRVYLELLADLPWDKASEEHELDLKAAKERLDSDHYGLAKVKQRIIEYLAVRKLKPDARGPVLCFVGPPGVGKTSLASSIAAALGRKFVRLSLGGVKDEADIRGHRRTYIGSMPGRLIDGLKRVGVCNPVMLLDEIDKTGSDVRGDPASALLEVLDPEQNKSFNDHYLNVPYDLSKVVFVATANRVQPIPPPLLDRMELIELPGYTQEEKLKIAMRHLIPRVLDQHGLSSEFLKIPEAMVKNIIQRYTREAGVRSLERNLAALARAAAVMVAEHEQSLPLSKDVQKLTSPLLNGRMAEGGEVEMEVIPMGVNDHEIGGTFQSPSALVVDETMLEKILGPPRFDDSEAADRVASAGVSVGLVWTTFGGEVQFVEATSMVGKGEMHLTGQLGDVIKESAQLALTWVRARASDFKLALAGDMNVLDGRDIHIHFPAGAVPKDGPSAGVTLVTALVSLFSQKRVRADTAMTGEMTLRGLVLPVGGIKDKILAAHRYGIKRVILPQRNSKDLVEVPAAVLSSLEVILAKRMEDVLENAFEGGCPWRNNYSKL.

The 245-residue stretch at 11–255 (LAILPFRNKV…KATELVDRHL (245 aa)) folds into the Lon N-terminal domain. ATP is bound at residue 408–415 (GPPGVGKT). Positions 692-877 (VASAGVSVGL…EDVLENAFEG (186 aa)) constitute a Lon proteolytic domain. Catalysis depends on residues serine 783 and lysine 826. The Microbody targeting signal signature appears at 886 to 888 (SKL).

It belongs to the peptidase S16 family.

It is found in the peroxisome matrix. It carries out the reaction Hydrolysis of proteins in presence of ATP.. In terms of biological role, ATP-dependent serine protease that mediates the selective degradation of misfolded and unassembled polypeptides in the peroxisomal matrix. Necessary for type 2 peroxisome targeting signal (PTS2)-containing protein processing and facilitates peroxisome matrix protein import. The polypeptide is Lon protease homolog 2, peroxisomal (LON2) (Arabidopsis thaliana (Mouse-ear cress)).